The sequence spans 158 residues: UPAR/Ly6 domain-containing protein crim (158 aa).

A signal peptide spans 1-22 (MHYHTNLIAALLLAALIHEGSA). The Extracellular segment spans residues 23–136 (IWCYRCTSAT…FCFLDHRCNG (114 aa)). N-linked (GlcNAc...) asparagine glycosylation occurs at Asn107. Asn135 carries the GPI-anchor amidated asparagine lipid modification. The propeptide at 136 to 158 (GASGLQTSAVIGLLTLIPALLLR) is removed in mature form. The chain crosses the membrane as a helical span at residues 137–157 (ASGLQTSAVIGLLTLIPALLL). Position 158 (Arg158) is a topological domain, cytoplasmic.

Belongs to the quiver family.

It localises to the membrane. Required for septate junction assembly possibly by organizing the preassembly and transport of septate junction proteins. Involved in epithelial cell septate junction-mediated paracellular barrier functions of trachea, hindgut and salivary gland. The protein is UPAR/Ly6 domain-containing protein crim of Drosophila melanogaster (Fruit fly).